Consider the following 418-residue polypeptide: UDP-N-acetylglucosamine 1-carboxyvinyltransferase (418 aa).

Lys22–Asn23 provides a ligand contact to phosphoenolpyruvate. Arg92 serves as a coordination point for UDP-N-acetyl-alpha-D-glucosamine. The active-site Proton donor is the Cys116. Residue Cys116 is modified to 2-(S-cysteinyl)pyruvic acid O-phosphothioketal. UDP-N-acetyl-alpha-D-glucosamine-binding positions include Arg121–Leu125, Asp305, and Leu327.

Belongs to the EPSP synthase family. MurA subfamily.

Its subcellular location is the cytoplasm. The enzyme catalyses phosphoenolpyruvate + UDP-N-acetyl-alpha-D-glucosamine = UDP-N-acetyl-3-O-(1-carboxyvinyl)-alpha-D-glucosamine + phosphate. It participates in cell wall biogenesis; peptidoglycan biosynthesis. Its function is as follows. Cell wall formation. Adds enolpyruvyl to UDP-N-acetylglucosamine. This is UDP-N-acetylglucosamine 1-carboxyvinyltransferase from Campylobacter jejuni (strain RM1221).